The primary structure comprises 599 residues: UvrABC system protein C (599 aa).

The 77-residue stretch at 19 to 95 (ESTGVYIFYD…IKKYRPIMNV (77 aa)) folds into the GIY-YIG domain. In terms of domain architecture, UVR spans 206 to 241 (EEIIEKLYDQMQEYSKNLEFEKAAKIRDKIRLLQNL).

The protein belongs to the UvrC family. Interacts with UvrB in an incision complex.

The protein resides in the cytoplasm. The UvrABC repair system catalyzes the recognition and processing of DNA lesions. UvrC both incises the 5' and 3' sides of the lesion. The N-terminal half is responsible for the 3' incision and the C-terminal half is responsible for the 5' incision. In Dictyoglomus thermophilum (strain ATCC 35947 / DSM 3960 / H-6-12), this protein is UvrABC system protein C.